The sequence spans 236 residues: uncharacterized protein (236 aa).

To E.coli YfjP and YkfA.

This is an uncharacterized protein from Escherichia coli (strain K12).